A 452-amino-acid chain; its full sequence is GTPase Der (452 aa).

2 EngA-type G domains span residues 4-169 and 177-352; these read PIVA…PSPD and INVS…EEHR. GTP contacts are provided by residues 10–17, 57–61, 120–123, 183–190, 230–234, and 295–298; these read GRPNVGKS, DTGGL, NKCE, DTAGI, and NKWD. Residues 353–438 enclose the KH-like domain; that stretch reads RRVNTSVVNE…PIRLLWRGKK (86 aa).

It belongs to the TRAFAC class TrmE-Era-EngA-EngB-Septin-like GTPase superfamily. EngA (Der) GTPase family. Associates with the 50S ribosomal subunit.

Functionally, GTPase that plays an essential role in the late steps of ribosome biogenesis. In Crocosphaera subtropica (strain ATCC 51142 / BH68) (Cyanothece sp. (strain ATCC 51142)), this protein is GTPase Der.